A 105-amino-acid polypeptide reads, in one-letter code: Multidrug resistance protein EbrA (105 aa).

4 helical membrane passes run Ile2 to Leu22, Val35 to Ile55, Ser60 to Phe80, and Arg87 to Leu104.

The protein belongs to the drug/metabolite transporter (DMT) superfamily. Small multidrug resistance (SMR) (TC 2.A.7.1) family. EbrA/EbrB subfamily. As to quaternary structure, the efflux pump is composed of EbrA and EbrB.

The protein localises to the cell membrane. In terms of biological role, part of a multidrug efflux pump. Confers resistance to cationic lipophilic dyes such as ethidium bromide, acriflavine, pyronine Y and safranin O. The efflux is probably coupled to an influx of protons. This Bacillus licheniformis (strain ATCC 14580 / DSM 13 / JCM 2505 / CCUG 7422 / NBRC 12200 / NCIMB 9375 / NCTC 10341 / NRRL NRS-1264 / Gibson 46) protein is Multidrug resistance protein EbrA (ebrA).